Consider the following 504-residue polypeptide: Heat shock 70 kDa protein 14 (504 aa).

The protein belongs to the heat shock protein 70 family. In terms of assembly, component of ribosome-associated complex (RAC).

It is found in the cytoplasm. The protein resides in the cytosol. Its function is as follows. Component of the ribosome-associated complex (RAC), a complex involved in folding or maintaining nascent polypeptides in a folding-competent state. This chain is Heat shock 70 kDa protein 14 (hspa14), found in Danio rerio (Zebrafish).